The following is a 458-amino-acid chain: Histone acetyltransferase Tip60 homolog (458 aa).

Residues M1–P24 are disordered. A Tudor-knot domain is found at V30 to L86. Residues K94 to I123 are disordered. Over residues H101–K116 the composition is skewed to basic and acidic residues. The MYST-type HAT domain maps to T168 to P446. Residues I201 to M226 form a C2HC MYST-type zinc finger. An N6-acetyllysine; by autocatalysis modification is found at K268. Residues I311 to V313 and Q318 to S324 each bind acetyl-CoA. The active-site Proton donor/acceptor is E344. Positions 348 and 357 each coordinate acetyl-CoA.

It belongs to the MYST (SAS/MOZ) family. As to quaternary structure, interacts with transcription-associated protein trr-1. Probably a component of a complex with histone acetyltransferase (HAT) activity, at least composed of mys-1 and trr-1. Autoacetylation at Lys-268 is required for binding histones with high affinity and for proper function.

Its subcellular location is the nucleus. It carries out the reaction L-lysyl-[protein] + acetyl-CoA = N(6)-acetyl-L-lysyl-[protein] + CoA + H(+). Functionally, probable catalytic subunit of the Tip60 chromatin-remodeling complex. Plays a role in acetylation of nucleosomal histone H4 and perhaps also H2A, probably acting as a component of the Tip60 histone acetyltransferase complex. Acts in the determination of vulval and distal tip cell (DTC) precursor cell fates. Involved in the positive regulation of transcription factor daf-16, probably acting by histone acetylation; thereby modulating stress resistance. This is Histone acetyltransferase Tip60 homolog from Caenorhabditis elegans.